Here is a 208-residue protein sequence, read N- to C-terminus: Outer-membrane lipoprotein carrier protein (208 aa).

An N-terminal signal peptide occupies residues 1-25; sequence MKKLFSAKLFSALVLSFSLFSTAHA.

Belongs to the LolA family. As to quaternary structure, monomer.

The protein resides in the periplasm. Its function is as follows. Participates in the translocation of lipoproteins from the inner membrane to the outer membrane. Only forms a complex with a lipoprotein if the residue after the N-terminal Cys is not an aspartate (The Asp acts as a targeting signal to indicate that the lipoprotein should stay in the inner membrane). The sequence is that of Outer-membrane lipoprotein carrier protein from Vibrio campbellii (strain ATCC BAA-1116).